The sequence spans 703 residues: Calpain-8 (703 aa).

Residues 45–344 form the Calpain catalytic domain; that stretch reads LFKDPEFPAC…YSRLEICNLS (300 aa). Active-site residues include Cys-105, His-262, and Asn-286. Positions 355–512 are domain III; it reads KWNLVLFNGR…VFSEKKAKAL (158 aa). Residues 513-531 form a linker region; sequence EIGDTVSGHPHEPHPRDMD. 4 EF-hand domains span residues 532-566, 575-608, 605-640, and 670-703; these read EEDE…VLSK, FNIN…LKIR, LKIR…AGFT, and IRLE…CVLV. Positions 532-703 are domain IV; that stretch reads EEDEHVRSLF…LAEWLCCVLV (172 aa). 9 residues coordinate Ca(2+): Asp-588, Asp-590, Thr-592, Ser-594, Glu-599, Asp-618, Asn-620, Thr-624, and Glu-629.

Belongs to the peptidase C2 family. In terms of assembly, monomer and homooligomer. Interacts with COPS1/GPS1, COPB1, EYA2, NME2, NME4 and TOMM70. It depends on Ca(2+) as a cofactor. In terms of processing, undergoes autolytic cleavage between Ala-5 and Ala-6 which gives rise to fragments extending from Ala-6 to the C-terminus, Ala-6 to the EF-hand 2 domain and from Ala-6 to the beginning of domain III. Predominantly expressed in the stomach. Localizes strictly to the surface mucus cells in the gastric epithelium and the mucus-secreting goblet cells in the duodenum. Detected in the pituitary after estrogen stimulation.

Its subcellular location is the cytoplasm. The protein localises to the golgi apparatus. It catalyses the reaction Broad endopeptidase specificity.. Its function is as follows. Calcium-regulated non-lysosomal thiol-protease. Involved in membrane trafficking in the gastric surface mucus cells (pit cells) and may involve the membrane trafficking of mucus cells via interactions with coat protein. Proteolytically cleaves the beta-subunit of coatomer complex. The protein is Calpain-8 (Capn8) of Rattus norvegicus (Rat).